The sequence spans 218 residues: MRTRVKICGLTREQDIASAVRAGADAIGFVFYPASKRHVDPVRAAQLRREVPAFVDVVALFVNPRPDEVQAVLDHVAPDLLQFHGDETPQDCGRYGRRYLRAFRAGAPGLDSTAGLAAACRQYADAAGWLFDSYSAGYGGSGQGFDHGLLAGVQADPASRAIVLAGGLHPGNVADAVRAVRPWAVDVSSGVEDAPGVKSADKIRQLMAAIKSVDQVAR.

This sequence belongs to the TrpF family.

It carries out the reaction N-(5-phospho-beta-D-ribosyl)anthranilate = 1-(2-carboxyphenylamino)-1-deoxy-D-ribulose 5-phosphate. Its pathway is amino-acid biosynthesis; L-tryptophan biosynthesis; L-tryptophan from chorismate: step 3/5. The protein is N-(5'-phosphoribosyl)anthranilate isomerase of Bordetella parapertussis (strain 12822 / ATCC BAA-587 / NCTC 13253).